Reading from the N-terminus, the 228-residue chain is Ephrin-A5 (228 aa).

An N-terminal signal peptide occupies residues 1-20 (MLHVEMLTLLFLVLWMCVFS). An Ephrin RBD domain is found at 29-162 (ADRYAVYWNS…KLKVFVRPTN (134 aa)). The N-linked (GlcNAc...) asparagine glycan is linked to asparagine 37. 2 disulfides stabilise this stretch: cysteine 62-cysteine 102 and cysteine 90-cysteine 151. Residue asparagine 162 is glycosylated (N-linked (GlcNAc...) asparagine; atypical). The segment at 186–205 (EPADDTVHESAEPSRGENAA) is disordered. Positions 190 to 200 (DTVHESAEPSR) are enriched in basic and acidic residues. Residue asparagine 203 is the site of GPI-anchor amidated asparagine attachment. Positions 204–228 (AAQTPRIPSRLLAILLFLLAMLLTL) are cleaved as a propeptide — removed in mature form.

It belongs to the ephrin family. In terms of assembly, binds to the receptor tyrosine kinases EPHA2, EPHA3 and EPHB1. Forms a ternary EFNA5-EPHA3-ADAM10 complex mediating EFNA5 extracellular domain shedding by ADAM10 which regulates the EFNA5-EPHA3 complex internalization and function. Binds to EPHB2. Interacts with EPHA8; activates EPHA8. In terms of tissue distribution, expressed in myogenic progenitor cells.

It localises to the cell membrane. The protein resides in the membrane. Its subcellular location is the caveola. Its function is as follows. Cell surface GPI-bound ligand for Eph receptors, a family of receptor tyrosine kinases which are crucial for migration, repulsion and adhesion during neuronal, vascular and epithelial development. Binds promiscuously Eph receptors residing on adjacent cells, leading to contact-dependent bidirectional signaling into neighboring cells. The signaling pathway downstream of the receptor is referred to as forward signaling while the signaling pathway downstream of the ephrin ligand is referred to as reverse signaling. Induces compartmentalized signaling within a caveolae-like membrane microdomain when bound to the extracellular domain of its cognate receptor. This signaling event requires the activity of the Fyn tyrosine kinase. Activates the EPHA3 receptor to regulate cell-cell adhesion and cytoskeletal organization. With the receptor EPHA2 may regulate lens fiber cells shape and interactions and be important for lens transparency maintenance. May function actively to stimulate axon fasciculation. The interaction of EFNA5 with EPHA5 also mediates communication between pancreatic islet cells to regulate glucose-stimulated insulin secretion. Cognate/functional ligand for EPHA7, their interaction regulates brain development modulating cell-cell adhesion and repulsion. This is Ephrin-A5 (Efna5) from Mus musculus (Mouse).